A 36-amino-acid chain; its full sequence is Pancreatic polypeptide (36 aa).

Tyr-36 is modified (tyrosine amide).

This sequence belongs to the NPY family.

It is found in the secreted. Its function is as follows. Hormone secreted by pancreatic cells that acts as a regulator of pancreatic and gastrointestinal functions probably by signaling through the G protein-coupled receptor NPY4R2. The sequence is that of Pancreatic polypeptide (PPY) from Tapirus pinchaque (Mountain tapir).